Consider the following 143-residue polypeptide: Hemoglobin subunit alpha (143 aa).

At serine 2 the chain carries N-acetylserine. Residues 2-143 (SLSDTDKAVV…LALALSEKYR (142 aa)) form the Globin domain. Residue histidine 60 coordinates O2. Histidine 89 is a heme b binding site.

Belongs to the globin family. As to quaternary structure, heterotetramer of two alpha chains and two beta chains. As to expression, red blood cells.

Its function is as follows. Involved in oxygen transport from gills to the various peripheral tissues. In Danio rerio (Zebrafish), this protein is Hemoglobin subunit alpha (hbaa1).